A 244-amino-acid chain; its full sequence is Pyridoxal phosphate homeostasis protein (244 aa).

N6-(pyridoxal phosphate)lysine is present on K37.

This sequence belongs to the pyridoxal phosphate-binding protein YggS/PROSC family.

In terms of biological role, pyridoxal 5'-phosphate (PLP)-binding protein, which may be involved in intracellular homeostatic regulation of pyridoxal 5'-phosphate (PLP), the active form of vitamin B6. This chain is Pyridoxal phosphate homeostasis protein, found in Caenorhabditis elegans.